The following is a 264-amino-acid chain: Neurexophilin-2 (264 aa).

An N-terminal signal peptide occupies residues 1–22; it reads MRLRPLPLVVVPGLLQLLFCDS. Residues 23–90 are II; it reads EKVVHATEGL…WDWLANITEV (68 aa). 4 N-linked (GlcNAc...) asparagine glycosylation sites follow: Asn-86, Asn-139, Asn-149, and Asn-155. Residues 91–169 are III; sequence QEPLARTKRR…LVPPSKVVEF (79 aa). Residues 170 to 178 form an IV (linker domain) region; sequence EVSPQSTLE. Residues 179 to 264 are v (Cys-rich); sequence TKESKSFNCR…HSETPYLSSG (86 aa).

This sequence belongs to the neurexophilin family. May be proteolytically processed at the boundary between the N-terminal non-conserved and the central conserved domain in neuron-like cells. Brain, only in a scattered subpopulation of neurons that probably represent inhibitory interneurons.

Its subcellular location is the secreted. May be signaling molecules that resemble neuropeptides and that act by binding to alpha-neurexins and possibly other receptors. The protein is Neurexophilin-2 (NXPH2) of Bos taurus (Bovine).